Reading from the N-terminus, the 225-residue chain is uncharacterized protein (225 aa).

Positions 114-219 (DAEAIIMQVY…RLSVTMRRII (106 aa)) constitute a Fe2OG dioxygenase domain.

Belongs to the iron/ascorbate-dependent oxidoreductase family.

Its subcellular location is the cytoplasm. The protein localises to the nucleus. This is an uncharacterized protein from Schizosaccharomyces pombe (strain 972 / ATCC 24843) (Fission yeast).